Consider the following 419-residue polypeptide: UDP-N-acetylglucosamine 1-carboxyvinyltransferase (419 aa).

Phosphoenolpyruvate is bound at residue 22–23 (KN). Arg-95 lines the UDP-N-acetyl-alpha-D-glucosamine pocket. Cys-119 acts as the Proton donor in catalysis. Cys-119 carries the post-translational modification 2-(S-cysteinyl)pyruvic acid O-phosphothioketal. UDP-N-acetyl-alpha-D-glucosamine contacts are provided by residues 164–167 (KVSV), Asp-308, and Ile-330.

It belongs to the EPSP synthase family. MurA subfamily.

It localises to the cytoplasm. The enzyme catalyses phosphoenolpyruvate + UDP-N-acetyl-alpha-D-glucosamine = UDP-N-acetyl-3-O-(1-carboxyvinyl)-alpha-D-glucosamine + phosphate. It functions in the pathway cell wall biogenesis; peptidoglycan biosynthesis. Its function is as follows. Cell wall formation. Adds enolpyruvyl to UDP-N-acetylglucosamine. The protein is UDP-N-acetylglucosamine 1-carboxyvinyltransferase of Rickettsia conorii (strain ATCC VR-613 / Malish 7).